Consider the following 469-residue polypeptide: MSHNVITRFAPSPTGHLHLGGARTALFNWLYAKHNNGKFLLRIEDTDKKRSSKELIDSIINAMSWLKIPYDGEIVLQSKNISRHIEIANQLILNNKAYYCYCSEEEINKEKEEFSKKGLYYKHNCIWKNKNFTIDNLTRVIRLRSPTEGVTSFDDKVYGNITVSNTQLDDMVLLRSDNTPTYLLSVVVDDHDMNITHIIRGTDHLTNTARQLLIYNALEWNPPKFAHIPLIHDEDGNKLSKRHQAIGIHEYKNLGILPEAISNYLLRMGWSHEDDEIISMDQAIKWFSIKNIGQSPARLDNKKLEFLNNHYISLTEDEVILNMIIPIIEKKIGYMLNEVKKGYLLKGLYELKKRTKNLVNLANESLFYVEDVPISIDQEASAIIKDYKHVFSILYNNLSRISEKEWNNSILTSTIKNISQNLDIKISNIYHCLRASIVGRMNAPSIIEIMINLQQEECLKRIKYAQNIE.

Residues 11–21 (PSPTGHLHLGG) carry the 'HIGH' region motif. The 'KMSKS' region motif lies at 238–242 (KLSKR). Residue K241 participates in ATP binding.

This sequence belongs to the class-I aminoacyl-tRNA synthetase family. Glutamate--tRNA ligase type 1 subfamily. As to quaternary structure, monomer.

The protein resides in the cytoplasm. It carries out the reaction tRNA(Glu) + L-glutamate + ATP = L-glutamyl-tRNA(Glu) + AMP + diphosphate. Catalyzes the attachment of glutamate to tRNA(Glu) in a two-step reaction: glutamate is first activated by ATP to form Glu-AMP and then transferred to the acceptor end of tRNA(Glu). This Ehrlichia chaffeensis (strain ATCC CRL-10679 / Arkansas) protein is Glutamate--tRNA ligase 2.